Here is a 205-residue protein sequence, read N- to C-terminus: Keratin-associated protein 4-6 (205 aa).

Tandem repeats lie at residues Cys20–Ser24, Cys25–Thr29, Cys30–Thr34, Cys35–Ser39, Cys40–Ser44, Cys45–Gln49, Cys50–Val54, Cys55–Thr59, Cys60–Ser64, Cys65–Ser68, Cys69–Thr73, Cys74–Thr78, Cys79–Ser83, Cys84–Ser88, Cys89–Gln93, Cys94–Val98, Cys99–Thr103, Cys104–Ser108, Cys114–Ser118, Cys119–Arg123, Cys124–Gln128, Cys129–Val133, Cys134–Thr138, Cys139–Ser143, Cys144–Ser148, Cys149–Ser153, Cys154–Ser158, Cys159–Cys163, Cys164–Cys168, and Cys169–Pro173. Residues Cys20 to Pro173 are 30 X 5 AA repeats of C-C-[IRQVEL]-[SPTR]-[STVQRCP].

Belongs to the KRTAP type 4 family. In terms of assembly, interacts with hair keratins. As to expression, expressed in the hair follicles.

In the hair cortex, hair keratin intermediate filaments are embedded in an interfilamentous matrix, consisting of hair keratin-associated proteins (KRTAP), which are essential for the formation of a rigid and resistant hair shaft through their extensive disulfide bond cross-linking with abundant cysteine residues of hair keratins. The matrix proteins include the high-sulfur and high-glycine-tyrosine keratins. In Homo sapiens (Human), this protein is Keratin-associated protein 4-6 (KRTAP4-6).